Reading from the N-terminus, the 264-residue chain is NAD-capped RNA hydrolase NudC (264 aa).

Residues Cys-99 and Cys-102 each contribute to the Zn(2+) site. Residue Glu-112 participates in substrate binding. Residues Cys-117 and Cys-120 each contribute to the Zn(2+) site. Tyr-125 lines the substrate pocket. Residues 126–253 (PVICPSIIVA…TIARKLIHVT (128 aa)) form the Nudix hydrolase domain. A divalent metal cation contacts are provided by Ala-162, Glu-178, and Glu-182. The Nudix box motif lies at 163–184 (GFVEVGETFEQAVQREVFEETG). 196–203 (QPWAFPNS) is a binding site for substrate. A divalent metal cation is bound at residue Glu-223. Position 246 (Ala-246) interacts with substrate.

It belongs to the Nudix hydrolase family. NudC subfamily. In terms of assembly, homodimer. Mg(2+) is required as a cofactor. Requires Mn(2+) as cofactor. The cofactor is Zn(2+).

It catalyses the reaction a 5'-end NAD(+)-phospho-ribonucleoside in mRNA + H2O = a 5'-end phospho-adenosine-phospho-ribonucleoside in mRNA + beta-nicotinamide D-ribonucleotide + 2 H(+). The catalysed reaction is NAD(+) + H2O = beta-nicotinamide D-ribonucleotide + AMP + 2 H(+). It carries out the reaction NADH + H2O = reduced beta-nicotinamide D-ribonucleotide + AMP + 2 H(+). Functionally, mRNA decapping enzyme that specifically removes the nicotinamide adenine dinucleotide (NAD) cap from a subset of mRNAs by hydrolyzing the diphosphate linkage to produce nicotinamide mononucleotide (NMN) and 5' monophosphate mRNA. The NAD-cap is present at the 5'-end of some mRNAs and stabilizes RNA against 5'-processing. Has preference for mRNAs with a 5'-end purine. Catalyzes the hydrolysis of a broad range of dinucleotide pyrophosphates. The chain is NAD-capped RNA hydrolase NudC from Haemophilus influenzae (strain ATCC 51907 / DSM 11121 / KW20 / Rd).